Here is a 109-residue protein sequence, read N- to C-terminus: Ig kappa chain V region 3374 (109 aa).

The tract at residues 1–24 (ADIVMTQTPASVSAAVGGTVTINC) is framework-1. The complementarity-determining-1 stretch occupies residues 25–35 (QASQNIDSWLA). The framework-2 stretch occupies residues 36-50 (WYQQKPGQPPKVLIY). The tract at residues 51–57 (RTSTLAS) is complementarity-determining-2. The framework-3 stretch occupies residues 58 to 89 (GVPSRFKGSRSGTEFTLTISDLECADAATYYC). Positions 90 to 98 (QSYYSISSA) are complementarity-determining-3. Residues 99–108 (FGGGTEVVVK) form a framework-4 region.

The chain is Ig kappa chain V region 3374 from Oryctolagus cuniculus (Rabbit).